The following is a 156-amino-acid chain: MPRKGPVPKRQILPDPVYGSQLATKFMNRLMYDGKKSVSENIFYQALEFLGDKTQEDPIKAFEKAVENVKPHVEVKSRRVGGATYQVPVEVRPDRQVSLAIRWLINFARSRGEKGMVARLSGEFLDAYNKRGGAVKKKEDTHRMAEANKAFAHYRW.

The protein belongs to the universal ribosomal protein uS7 family. Part of the 30S ribosomal subunit. Contacts proteins S9 and S11.

One of the primary rRNA binding proteins, it binds directly to 16S rRNA where it nucleates assembly of the head domain of the 30S subunit. Is located at the subunit interface close to the decoding center, probably blocks exit of the E-site tRNA. This is Small ribosomal subunit protein uS7 from Maridesulfovibrio salexigens (strain ATCC 14822 / DSM 2638 / NCIMB 8403 / VKM B-1763) (Desulfovibrio salexigens).